Here is a 36-residue protein sequence, read N- to C-terminus: Pancreatic polypeptide (36 aa).

Tyr-36 is subject to Tyrosine amide.

Belongs to the NPY family.

It is found in the secreted. Hormone secreted by pancreatic cells that acts as a regulator of pancreatic and gastrointestinal functions. This Struthio camelus (Common ostrich) protein is Pancreatic polypeptide (PPY).